Consider the following 257-residue polypeptide: Zinc uptake system ATP-binding protein ZurA (257 aa).

Positions 5-241 (IEVNNVSYHY…ADRELEILAE (237 aa)) constitute an ABC transporter domain. 37 to 44 (GPNGSGKS) contributes to the ATP binding site.

This sequence belongs to the ABC transporter superfamily.

Its function is as follows. Involved in a zinc uptake transport system. The protein is Zinc uptake system ATP-binding protein ZurA (zurA) of Listeria innocua serovar 6a (strain ATCC BAA-680 / CLIP 11262).